Reading from the N-terminus, the 454-residue chain is MELKGKKVLVAGLGVSGIALCKVLDSLKAKVIAYDEKEYDVLKENLEEIKSLSIDFRFGKFKKEFLEGVDLVVLSPGVPTDSDIVKTAQEKKIELLGEVEFAYRFSKAPIYAITGTNGKTTTTSLLGEMFKNTGRKVYVAGNIGYPLIYAVMEAAEGDFIVAEISSFQLETIKEFKPKISCIINITPDHLDRHKTFENYRDIKGRIFENQREDEYTVLNYDDPVTWSLKNKAKCRVFPFSRKSLLENGAYIKDGSIYISVNGNAEKIIDIEEIYIPGEHNLENALAASSVAYLSGISADVIANTLKTFKGVEHRIEFVDEINGVKFYNDSKGTNPDASIKAIQALKTPIVLIAGGYDKGSEFDEFVKAFNGKVKKLILIGQTAKKIRDTARKYSYPEDDILFAGTLEEAVKKAYESAKEGDSVLLSPACASWDMFRNFEERGRIFKKAVAELRR.

Gly115–Thr121 lines the ATP pocket.

Belongs to the MurCDEF family.

The protein resides in the cytoplasm. The catalysed reaction is UDP-N-acetyl-alpha-D-muramoyl-L-alanine + D-glutamate + ATP = UDP-N-acetyl-alpha-D-muramoyl-L-alanyl-D-glutamate + ADP + phosphate + H(+). The protein operates within cell wall biogenesis; peptidoglycan biosynthesis. Its function is as follows. Cell wall formation. Catalyzes the addition of glutamate to the nucleotide precursor UDP-N-acetylmuramoyl-L-alanine (UMA). In Thermoanaerobacter pseudethanolicus (strain ATCC 33223 / 39E) (Clostridium thermohydrosulfuricum), this protein is UDP-N-acetylmuramoylalanine--D-glutamate ligase.